Here is a 148-residue protein sequence, read N- to C-terminus: Male-specific protein scotti (148 aa).

A disordered region spans residues 56–78 (PQEPPLGVFPAQGGPNGPPRLRK). N129 carries an N-linked (GlcNAc...) asparagine glycan.

The protein belongs to the male-specific scotti family.

In terms of biological role, post-meiotically transcribed gene that has a role in late spermiogenesis; required for actin cone progression during spermatid individualization. The polypeptide is Male-specific protein scotti (Drosophila sechellia (Fruit fly)).